Here is a 481-residue protein sequence, read N- to C-terminus: Multiple inositol polyphosphate phosphatase 1 (481 aa).

The first 30 residues, 1-30, serve as a signal peptide directing secretion; that stretch reads MLRGARSHLPASVAPAAVLAAALLSSFARC. Residue H89 is part of the active site. N236 and N475 each carry an N-linked (GlcNAc...) asparagine glycan. Residues 478-481 carry the Prevents secretion from ER motif; sequence SDEL.

The protein belongs to the histidine acid phosphatase family. MINPP1 subfamily. In terms of processing, N-glycosylated. In terms of tissue distribution, widely expressed with highest levels in kidney, intestine, thymus and liver.

The protein localises to the endoplasmic reticulum lumen. The protein resides in the secreted. It localises to the cell membrane. It catalyses the reaction 1D-myo-inositol hexakisphosphate + H2O = 1D-myo-inositol 1,2,4,5,6-pentakisphosphate + phosphate. It carries out the reaction 1D-myo-inositol 1,2,4,5,6-pentakisphosphate + H2O = 1D-myo-inositol 1,2,5,6-tetrakisphosphate + phosphate. The catalysed reaction is 1D-myo-inositol 1,2,5,6-tetrakisphosphate + H2O = 1D-myo-inositol 1,2,6-trisphosphate + phosphate. The enzyme catalyses 1D-myo-inositol 1,2,6-trisphosphate + H2O = 1D-myo-inositol 1,2-bisphosphate + phosphate. It catalyses the reaction 1D-myo-inositol 1,2-bisphosphate + H2O = 1D-myo-inositol 2-phosphate + phosphate. It carries out the reaction 1D-myo-inositol hexakisphosphate + H2O = 1D-myo-inositol 1,2,3,5,6-pentakisphosphate + phosphate. The catalysed reaction is 1D-myo-inositol 1,2,3,5,6-pentakisphosphate + H2O = 1D-myo-inositol 1,2,3,6-tetrakisphosphate + phosphate. The enzyme catalyses 1D-myo-inositol 1,2,3,6-tetrakisphosphate + H2O = 1D-myo-inositol 1,2,3-trisphosphate + phosphate. It catalyses the reaction 1D-myo-inositol 1,2,3-trisphosphate + H2O = 1D-myo-inositol 2,3-bisphosphate + phosphate. It carries out the reaction 1D-myo-inositol 2,3-bisphosphate + H2O = 1D-myo-inositol 2-phosphate + phosphate. The catalysed reaction is 1D-myo-inositol 1,3,4,5,6-pentakisphosphate + H2O = 1D-myo-inositol 1,4,5,6-tetrakisphosphate + phosphate. The enzyme catalyses 1D-myo-inositol 1,4,5,6-tetrakisphosphate + H2O = 1D-myo-inositol 1,4,5-trisphosphate + phosphate. It catalyses the reaction (2R)-2,3-bisphosphoglycerate + H2O = (2R)-2-phosphoglycerate + phosphate. In terms of biological role, multiple inositol polyphosphate phosphatase that hydrolyzes 1D-myo-inositol 1,3,4,5,6-pentakisphosphate (InsP5[2OH]) and 1D-myo-inositol hexakisphosphate (InsP6) to a range of less phosphorylated inositol phosphates. This regulates the availability of these various small molecule second messengers and metal chelators which control many aspects of cell physiology. Has a weak in vitro activity towards 1D-myo-inositol 1,4,5-trisphosphate which is unlikely to be physiologically relevant. By regulating intracellular inositol polyphosphates pools, which act as metal chelators, it may control the availability of intracellular calcium and iron, which are important for proper neuronal development and homeostasis. May have a dual substrate specificity, and function as a 2,3-bisphosphoglycerate 3-phosphatase hydrolyzing 2,3-bisphosphoglycerate to 2-phosphoglycerate. 2,3-bisphosphoglycerate (BPG) is formed as part of the Rapoport-Luebering glycolytic bypass and is a regulator of systemic oxygen homeostasis as the major allosteric effector of hemoglobin. In Mus musculus (Mouse), this protein is Multiple inositol polyphosphate phosphatase 1.